The primary structure comprises 278 residues: Small ribosomal subunit protein uS3 (278 aa).

Residues 39 to 107 (VRDFLKKRLA…PVHVNIEEVR (69 aa)) form the KH type-2 domain. The interval 217–278 (VENENEARRG…DAAAVEKEVS (62 aa)) is disordered. Residues 230 to 239 (PRNDAGDNRG) are compositionally biased toward basic and acidic residues.

This sequence belongs to the universal ribosomal protein uS3 family. Part of the 30S ribosomal subunit. Forms a tight complex with proteins S10 and S14.

Its function is as follows. Binds the lower part of the 30S subunit head. Binds mRNA in the 70S ribosome, positioning it for translation. The protein is Small ribosomal subunit protein uS3 of Aromatoleum aromaticum (strain DSM 19018 / LMG 30748 / EbN1) (Azoarcus sp. (strain EbN1)).